Here is a 175-residue protein sequence, read N- to C-terminus: Receptor activity-modifying protein 2 (175 aa).

The first 42 residues, 1 to 42, serve as a signal peptide directing secretion; sequence MASLRVERAGGPRLPRTRVGRPAALRLLLLLGAVLNPHEALA. Residues 43 to 143 are Extracellular-facing; it reads QPLPTTGTPG…VQPTFSDPPE (101 aa). 2 disulfide bridges follow: C68–C99 and C84–C131. An N-linked (GlcNAc...) asparagine glycan is attached at N130. Residues 144 to 165 traverse the membrane as a helical segment; sequence DVLLAMIIAPICLIPFLITLVV. Residues 166–175 are Cytoplasmic-facing; that stretch reads WRSKDSEAQA.

This sequence belongs to the RAMP family. In terms of assembly, heterodimer of CALCRL and RAMP2; the interaction forms the receptor complex for adrenomedullin/ADM. Heterodimer of CALCR and RAMP2; interaction forms the AMYR2 receptor complex for calcitonin/CALC and amylin/IAPP. Strongly expressed in lung, breast, immune system and fetal tissues.

The protein localises to the cell membrane. Functionally, accessory protein that interacts with and modulates the function of G-protein coupled receptors including calcitonin gene-related peptide type 1 receptor (CALCRL) and calcitonin receptor (CALCR). Required for the transport of CALCRL to the plasma membrane. Together with CALCRL, form a receptor complex for adrenomedullin/ADM. Together with CALCR, act as a receptor complex for calcitonin/CT/CALC. Together with CALCR, also act as a receptor complex for amylin/IAPP. This Homo sapiens (Human) protein is Receptor activity-modifying protein 2.